Consider the following 259-residue polypeptide: MSRLDGKTILITGASSGIGKSTAFEIAKVAKVKLILAARRFSTVEEIAKELESKYEVSVLPLKLDVSDLKSIPGVIESLPKEFADIDVLINNAGLALGTDKVIDLNIDDAVTMITTNVLGMMAMTRAVLPIFYSKNKGDILNVGSIAGRESYVGGSVYCSTKSALAQFTSALRKETIDTRIRIMEVDPGLVETEFSVVRFHGDKQKADNVYKNSEPLTPEDIAEVILFALTRRENVVIADTLVFPSHQGGANHVYRKQA.

Ile11 contacts NADP(+). Residue Ser42 is modified to Phosphoserine. Thr43 is modified (phosphothreonine). Residues Asp65, Asn92, Arg126, Tyr158, Lys162, and Val191 each coordinate NADP(+). The active-site Proton acceptor is the Tyr158. The Lowers pKa of active site Tyr role is filled by Lys162.

It belongs to the short-chain dehydrogenases/reductases (SDR) family. In terms of assembly, homotetramer.

The protein localises to the cytoplasm. Its subcellular location is the nucleus. The enzyme catalyses L-allo-threonine + NADP(+) = aminoacetone + CO2 + NADPH. Its function is as follows. NADP-dependent dehydrogenase with broad substrate specificity acting on 3-hydroxy acids. Catalyzes the NADP-dependent oxidation of L-allo-threonine to L-2-amino-3-keto-butyrate, which is spontaneously decarboxylated into aminoacetone. Also acts on D-threonine, L-serine, D-serine, D-3-hydroxyisobutyrate, L-3-hydroxyisobutyrate, D-glycerate and L-glycerate. This chain is NADP-dependent 3-hydroxy acid dehydrogenase, found in Schizosaccharomyces pombe (strain 972 / ATCC 24843) (Fission yeast).